A 243-amino-acid polypeptide reads, in one-letter code: Peptidyl-tRNA hydrolase (243 aa).

Tyr-14 provides a ligand contact to tRNA. The active-site Proton acceptor is His-19. Phe-64, Asn-66, and Asn-112 together coordinate tRNA. Residues 184–225 are disordered; the sequence is AAQTRPAEKAKPLATAKPKEGEARTSGGSVAEVGAPPPSPTG. Residues 189-206 are compositionally biased toward basic and acidic residues; it reads PAEKAKPLATAKPKEGEA.

This sequence belongs to the PTH family. Monomer.

The protein localises to the cytoplasm. The enzyme catalyses an N-acyl-L-alpha-aminoacyl-tRNA + H2O = an N-acyl-L-amino acid + a tRNA + H(+). Hydrolyzes ribosome-free peptidyl-tRNAs (with 1 or more amino acids incorporated), which drop off the ribosome during protein synthesis, or as a result of ribosome stalling. In terms of biological role, catalyzes the release of premature peptidyl moieties from peptidyl-tRNA molecules trapped in stalled 50S ribosomal subunits, and thus maintains levels of free tRNAs and 50S ribosomes. This is Peptidyl-tRNA hydrolase from Rhodospirillum rubrum (strain ATCC 11170 / ATH 1.1.1 / DSM 467 / LMG 4362 / NCIMB 8255 / S1).